Here is a 90-residue protein sequence, read N- to C-terminus: Probable small nuclear ribonucleoprotein F (90 aa).

A Sm domain is found at 7 to 80; it reads NPRPFLQDLV…VLYIKKADEA (74 aa).

Belongs to the snRNP Sm proteins family. SmF/LSm6 subfamily.

It is found in the nucleus. It localises to the cytoplasm. Plays a role in pre-mRNA splicing as a core component of the spliceosomal U1, U2, U4 and U5 small nuclear ribonucleoproteins (snRNPs), the building blocks of the spliceosome. This is Probable small nuclear ribonucleoprotein F from Neurospora crassa (strain ATCC 24698 / 74-OR23-1A / CBS 708.71 / DSM 1257 / FGSC 987).